We begin with the raw amino-acid sequence, 443 residues long: Endothelin receptor type B (443 aa).

The first 26 residues, 1 to 26, serve as a signal peptide directing secretion; it reads MQPLPTLCGRVLVALILACGVAGVQG. The Extracellular portion of the chain corresponds to 27–102; the sequence is EERRFPPARA…RTIEIKETFK (76 aa). The span at 51-62 shows a compositional bias: polar residues; that stretch reads TKTSWPTGSNAS. The segment at 51–89 is disordered; the sequence is TKTSWPTGSNASVPRLSAPPQMPKAGRTAGAQRRTLPPP. N-linked (GlcNAc...) asparagine glycosylation is present at N60. A helical transmembrane segment spans residues 103-127; the sequence is YINTVVSCLVFVLGIIGNSTLLRII. The Cytoplasmic portion of the chain corresponds to 128–138; the sequence is YKNKCMRNGPN. A helical transmembrane segment spans residues 139-164; that stretch reads ILIASLALGDLLHIIIDIPINVYKLL. At 165–176 the chain is on the extracellular side; the sequence is AEDWPFGVEMCK. C175 and C256 are joined by a disulfide. Residues 177-198 form a helical membrane-spanning segment; the sequence is LVPFIQKASVGITVLSLCALSI. Residues 199-219 are Cytoplasmic-facing; that stretch reads DRYRAVASWSRIKGIGVPKWT. Residues 220–244 form a helical membrane-spanning segment; the sequence is AVEIVLIWVVSVVLAVPEAVGFDMI. The Extracellular segment spans residues 245–272; the sequence is TADYKGSYLRICLLHPTQKTAFMQFYKN. The helical transmembrane segment at 273 to 297 threads the bilayer; the sequence is AKDWWLFSFYFCLPLAITAFFYTLE. Over 298 to 325 the chain is Cytoplasmic; sequence TCEMLRKKSGMQIALNDHLKQRREVAKT. A Phosphoserine modification is found at S306. The helical transmembrane segment at 326-351 threads the bilayer; it reads VFCLVLVFALCWLPLHLSRILKHTLY. The Extracellular segment spans residues 352–363; that stretch reads DQNDPHRCELLS. A helical transmembrane segment spans residues 364–390; the sequence is FLLVLEYIGINMASLNSCINPIALYLV. Over 391-443 the chain is Cytoplasmic; that stretch reads SKRFKNCFKWCLCCWCQSFEEKQSLEDKQSCLKFKANDHGYDNFRSSNKYSSS. Residues C403, C404, and C406 are each lipidated (S-palmitoyl cysteine). S420 is subject to Phosphoserine. Y440 carries the post-translational modification Phosphotyrosine. Phosphoserine is present on residues S441, S442, and S443.

The protein belongs to the G-protein coupled receptor 1 family. Endothelin receptor subfamily. EDNRB sub-subfamily.

It localises to the cell membrane. Functionally, non-specific receptor for endothelin 1, 2, and 3. Mediates its action by association with G proteins that activate a phosphatidylinositol-calcium second messenger system. This is Endothelin receptor type B (EDNRB) from Equus caballus (Horse).